A 303-amino-acid chain; its full sequence is Small ribosomal subunit protein uS2 (303 aa).

The interval 258 to 303 (ATLRENAVVTENEVKKTDEEEGASSEAARADAQNEEAVAKPGEEVE) is disordered. The span at 294 to 303 (AVAKPGEEVE) shows a compositional bias: basic and acidic residues.

The protein belongs to the universal ribosomal protein uS2 family.

The chain is Small ribosomal subunit protein uS2 from Bifidobacterium animalis subsp. lactis (strain AD011).